The following is a 378-amino-acid chain: uncharacterized protein (378 aa).

6 residues coordinate Zn(2+): cysteine 38, histidine 60, cysteine 90, cysteine 93, cysteine 96, and cysteine 104.

It belongs to the zinc-containing alcohol dehydrogenase family. Class-III subfamily. It depends on Zn(2+) as a cofactor.

This is an uncharacterized protein from Bacillus subtilis (strain 168).